We begin with the raw amino-acid sequence, 512 residues long: Hyaluronidase PH-20 (512 aa).

An N-terminal signal peptide occupies residues 1-35 (MGELRFKHLFWGSFVESGGTFQTVLIFLLIPCSLT). N-linked (GlcNAc...) asparagine glycosylation is present at asparagine 46. Disulfide bonds link cysteine 60–cysteine 351 and cysteine 223–cysteine 237. Residue glutamate 147 is the Proton donor of the active site. N-linked (GlcNAc...) asparagine glycosylation occurs at asparagine 165. N-linked (GlcNAc...) asparagine glycosylation is found at asparagine 293 and asparagine 368. Intrachain disulfides connect cysteine 376–cysteine 387, cysteine 381–cysteine 435, and cysteine 437–cysteine 464.

The protein belongs to the glycosyl hydrolase 56 family.

The protein resides in the cell membrane. The catalysed reaction is Random hydrolysis of (1-&gt;4)-linkages between N-acetyl-beta-D-glucosamine and D-glucuronate residues in hyaluronate.. In terms of biological role, involved in sperm-egg adhesion. Upon fertilization sperm must first penetrate a layer of cumulus cells that surrounds the egg before reaching the zona pellucida. The cumulus cells are embedded in a matrix containing hyaluronic acid which is formed prior to ovulation. This protein aids in penetrating the layer of cumulus cells by digesting hyaluronic acid. The chain is Hyaluronidase PH-20 (Spam1) from Mus musculus (Mouse).